Here is a 159-residue protein sequence, read N- to C-terminus: NAD(P)H-quinone oxidoreductase subunit J, chloroplastic (159 aa).

It belongs to the complex I 30 kDa subunit family. As to quaternary structure, NDH is composed of at least 16 different subunits, 5 of which are encoded in the nucleus.

The protein localises to the plastid. The protein resides in the chloroplast thylakoid membrane. The catalysed reaction is a plastoquinone + NADH + (n+1) H(+)(in) = a plastoquinol + NAD(+) + n H(+)(out). The enzyme catalyses a plastoquinone + NADPH + (n+1) H(+)(in) = a plastoquinol + NADP(+) + n H(+)(out). Its function is as follows. NDH shuttles electrons from NAD(P)H:plastoquinone, via FMN and iron-sulfur (Fe-S) centers, to quinones in the photosynthetic chain and possibly in a chloroplast respiratory chain. The immediate electron acceptor for the enzyme in this species is believed to be plastoquinone. Couples the redox reaction to proton translocation, and thus conserves the redox energy in a proton gradient. The protein is NAD(P)H-quinone oxidoreductase subunit J, chloroplastic of Brachypodium distachyon (Purple false brome).